Here is a 281-residue protein sequence, read N- to C-terminus: Nucleotide-binding protein DNO_0399 (281 aa).

An ATP-binding site is contributed by 6 to 13 (GMSGAGKS). 55–58 (DARN) lines the GTP pocket.

Belongs to the RapZ-like family.

Displays ATPase and GTPase activities. This is Nucleotide-binding protein DNO_0399 from Dichelobacter nodosus (strain VCS1703A).